Here is a 398-residue protein sequence, read N- to C-terminus: Tryptophan synthase beta chain (398 aa).

At K88 the chain carries N6-(pyridoxal phosphate)lysine.

The protein belongs to the TrpB family. Tetramer of two alpha and two beta chains. Pyridoxal 5'-phosphate serves as cofactor.

It catalyses the reaction (1S,2R)-1-C-(indol-3-yl)glycerol 3-phosphate + L-serine = D-glyceraldehyde 3-phosphate + L-tryptophan + H2O. It participates in amino-acid biosynthesis; L-tryptophan biosynthesis; L-tryptophan from chorismate: step 5/5. In terms of biological role, the beta subunit is responsible for the synthesis of L-tryptophan from indole and L-serine. In Mannheimia succiniciproducens (strain KCTC 0769BP / MBEL55E), this protein is Tryptophan synthase beta chain.